The following is a 146-amino-acid chain: Large ribosomal subunit protein uL15 (146 aa).

Residues 1-39 form a disordered region; it reads MTLKLHNLRPAPGAKTAKTRVGRGEGSKGKTAGRGTKGT.

It belongs to the universal ribosomal protein uL15 family. Part of the 50S ribosomal subunit.

Functionally, binds to the 23S rRNA. The polypeptide is Large ribosomal subunit protein uL15 (Nocardioides sp. (strain ATCC BAA-499 / JS614)).